We begin with the raw amino-acid sequence, 330 residues long: tRNA pseudouridine synthase B (330 aa).

The Nucleophile role is filled by D42.

The protein belongs to the pseudouridine synthase TruB family. Type 1 subfamily.

The enzyme catalyses uridine(55) in tRNA = pseudouridine(55) in tRNA. Its function is as follows. Responsible for synthesis of pseudouridine from uracil-55 in the psi GC loop of transfer RNAs. This is tRNA pseudouridine synthase B from Lactococcus lactis subsp. cremoris (strain MG1363).